The chain runs to 461 residues: Photosystem II CP43 reaction center protein (461 aa).

Positions 1-2 (ME) are excised as a propeptide. An N-acetylthreonine modification is found at Thr-3. Residue Thr-3 is modified to Phosphothreonine. 5 helical membrane-spanning segments follow: residues 57–81 (LFEVAHFIPEKPMYEQGLILLPHLA), 122–143 (LIGPETLEESFPFFGYVWKDKN), 166–188 (KAMYFGGLFDPWSVGGGDVRVIT), 243–263 (KPWAWARRAFVWSGEAYLSYS), and 279–300 (WFNNTVYPSEFYGPTGPEASQS). Glu-355 is a [CaMn4O5] cluster binding site. A helical membrane pass occupies residues 435-459 (RARAAAAGFEKGIDRDNEPVLSMKP).

It belongs to the PsbB/PsbC family. PsbC subfamily. In terms of assembly, PSII is composed of 1 copy each of membrane proteins PsbA, PsbB, PsbC, PsbD, PsbE, PsbF, PsbH, PsbI, PsbJ, PsbK, PsbL, PsbM, PsbT, PsbX, PsbY, PsbZ, Psb30/Ycf12, at least 3 peripheral proteins of the oxygen-evolving complex and a large number of cofactors. It forms dimeric complexes. The cofactor is Binds multiple chlorophylls and provides some of the ligands for the Ca-4Mn-5O cluster of the oxygen-evolving complex. It may also provide a ligand for a Cl- that is required for oxygen evolution. PSII binds additional chlorophylls, carotenoids and specific lipids..

The protein resides in the plastid. The protein localises to the chloroplast thylakoid membrane. Functionally, one of the components of the core complex of photosystem II (PSII). It binds chlorophyll and helps catalyze the primary light-induced photochemical processes of PSII. PSII is a light-driven water:plastoquinone oxidoreductase, using light energy to abstract electrons from H(2)O, generating O(2) and a proton gradient subsequently used for ATP formation. The protein is Photosystem II CP43 reaction center protein of Tupiella akineta (Green alga).